Here is a 177-residue protein sequence, read N- to C-terminus: ATP synthase subunit delta (177 aa).

The protein belongs to the ATPase delta chain family. In terms of assembly, F-type ATPases have 2 components, F(1) - the catalytic core - and F(0) - the membrane proton channel. F(1) has five subunits: alpha(3), beta(3), gamma(1), delta(1), epsilon(1). F(0) has three main subunits: a(1), b(2) and c(10-14). The alpha and beta chains form an alternating ring which encloses part of the gamma chain. F(1) is attached to F(0) by a central stalk formed by the gamma and epsilon chains, while a peripheral stalk is formed by the delta and b chains.

The protein localises to the cell inner membrane. In terms of biological role, f(1)F(0) ATP synthase produces ATP from ADP in the presence of a proton or sodium gradient. F-type ATPases consist of two structural domains, F(1) containing the extramembraneous catalytic core and F(0) containing the membrane proton channel, linked together by a central stalk and a peripheral stalk. During catalysis, ATP synthesis in the catalytic domain of F(1) is coupled via a rotary mechanism of the central stalk subunits to proton translocation. Its function is as follows. This protein is part of the stalk that links CF(0) to CF(1). It either transmits conformational changes from CF(0) to CF(1) or is implicated in proton conduction. The protein is ATP synthase subunit delta of Cronobacter sakazakii (strain ATCC BAA-894) (Enterobacter sakazakii).